The sequence spans 586 residues: Retron Ec67 protein (586 aa).

The 234-residue stretch at 29–262 (FLTNVLYRIG…SRQEVTGLTV (234 aa)) folds into the Reverse transcriptase domain. Asp120, Asp201, and Asp202 together coordinate Mg(2+).

This sequence belongs to the bacterial reverse transcriptase family.

The enzyme catalyses DNA(n) + a 2'-deoxyribonucleoside 5'-triphosphate = DNA(n+1) + diphosphate. It carries out the reaction Endonucleolytic cleavage to 5'-phosphomonoester.. Its function is as follows. Reverse transcriptase (RT) component of antiviral defense system retron Ec67, minimally composed of a non-coding RNA (ncRNA) and this RT. Expression of these 2 elements confers protection against bacteriophage T5. At multiplicity of infection (MOI) of 0.02 cultures grow normally when infected with T5 without collapsing, at MOI 2 cultures enter growth stasis. Responsible for synthesis of msDNA-Ec67 (a branched molecule with RNA linked by a 2',5'-phosphodiester bond to ssDNA). The retron transcript serves as primer (from a conserved internal G residue) and template for the reaction, and codes for the RT. Can use other retrons as substrate (msDNA-Mx162 and msDNA-Ec86). Also able to synthesize DNA from a DNA template at least in vitro, although the enzyme is less active with a DNA template. This chain is Retron Ec67 protein, found in Escherichia coli.